A 144-amino-acid chain; its full sequence is Large ribosomal subunit protein uL13 (144 aa).

This sequence belongs to the universal ribosomal protein uL13 family. Part of the 50S ribosomal subunit.

In terms of biological role, this protein is one of the early assembly proteins of the 50S ribosomal subunit, although it is not seen to bind rRNA by itself. It is important during the early stages of 50S assembly. This is Large ribosomal subunit protein uL13 from Ruminiclostridium cellulolyticum (strain ATCC 35319 / DSM 5812 / JCM 6584 / H10) (Clostridium cellulolyticum).